A 141-amino-acid chain; its full sequence is Large ribosomal subunit protein uL11 (141 aa).

It belongs to the universal ribosomal protein uL11 family. In terms of assembly, part of the ribosomal stalk of the 50S ribosomal subunit. Interacts with L10 and the large rRNA to form the base of the stalk. L10 forms an elongated spine to which L12 dimers bind in a sequential fashion forming a multimeric L10(L12)X complex. One or more lysine residues are methylated.

Forms part of the ribosomal stalk which helps the ribosome interact with GTP-bound translation factors. The protein is Large ribosomal subunit protein uL11 of Levilactobacillus brevis (strain ATCC 367 / BCRC 12310 / CIP 105137 / JCM 1170 / LMG 11437 / NCIMB 947 / NCTC 947) (Lactobacillus brevis).